The primary structure comprises 152 residues: Snaclec coagulation factor IX/factor X-binding protein subunit A (152 aa).

Residues Met-1–Ala-23 form the signal peptide. Disulfide bonds link Cys-25-Cys-36, Cys-53-Cys-150, and Cys-125-Cys-142. One can recognise a C-type lectin domain in the interval Tyr-32 to Glu-151. The Ca(2+) site is built by Ser-64, Glu-66, and Glu-70. Position 151 (Glu-151) interacts with Ca(2+).

The protein belongs to the snaclec family. In terms of assembly, heterodimer of subunits A and B; disulfide-linked. Expressed by the venom gland.

It localises to the secreted. In terms of biological role, anticoagulant protein which binds to the gamma-carboxyglutamic acid-domain regions of factors IX (F9) and factor X (F10) in the presence of calcium with a 1 to 1 stoichiometry. The protein is Snaclec coagulation factor IX/factor X-binding protein subunit A of Gloydius halys (Chinese water mocassin).